Consider the following 274-residue polypeptide: Glycerol uptake facilitator protein (274 aa).

2 consecutive transmembrane segments (helical) span residues 3–23 (AFWG…GVCA) and 38–58 (IVVV…VGGI). The short motif at 64 to 66 (NPA) is the NPA 1 element. Helical transmembrane passes span 82-102 (VPVY…IIYL), 131-151 (FANV…ILAI), and 164-184 (IVGF…GYAI). The NPA 2 motif lies at 185-187 (NPA). The chain crosses the membrane as a helical span at residues 238–258 (ITSSFWIVSVILVVVLLGLYV).

The protein belongs to the MIP/aquaporin (TC 1.A.8) family.

Its subcellular location is the cell membrane. It catalyses the reaction glycerol(in) = glycerol(out). In terms of biological role, mediates glycerol diffusion across the cytoplasmic membrane via a pore-type mechanism. The sequence is that of Glycerol uptake facilitator protein (glpF) from Bacillus subtilis (strain 168).